A 404-amino-acid polypeptide reads, in one-letter code: Growth/differentiation factor 6-A (404 aa).

An N-terminal signal peptide occupies residues 1 to 24 (MDALRAVAFYALFVFLWSLPCCQS). The propeptide occupies 25 to 284 (AALISQKRSK…LQFKARRRRR (260 aa)). A glycan (N-linked (GlcNAc...) asparagine) is linked at Asn91. Positions 263–304 (KSRGDDDEEESALQFKARRRRRTALNNRHGKRHGKKSKSRCS) are disordered. Residues 278–304 (KARRRRRTALNNRHGKRHGKKSKSRCS) are compositionally biased toward basic residues. Disulfide bonds link Cys303–Cys369, Cys332–Cys401, and Cys336–Cys403.

It belongs to the TGF-beta family. Homodimer; disulfide-linked. First expressed in late gastrula stage embryos (9.5 hours post fertilization (hpf)) in anterior neuroectoderm corresponding to the future dorsal part of the brain. Shortly after tailbud formation (11 hpf), expression expands to the entire neural region and is subsequently expressed in derivatives of the lateral neural plate and migrating neural crest cells, with the future midbrain and hindbrain showing strong expression. Also expressed weakly and transiently in the posterior embryo from 11.5 hpf to 15 hpf in the lateral mesoderm, and in ectoderm above the neural keel. At 14 hpf, expressed along the entire length of the embryo and starting around the 16-somite stage, expressed in the dorsal quadrant of the retina, representing the distal tip of the eye anlage. At this stage, also expressed in the hatching gland and the hypochord. At 24 hpf, expressed in the roof plate outlining the fourth brain ventricle, in the posterior hypochord, the primitive gut endoderm, the ventral tail mesenchyme, the dorsal part of the neural tube and the dorsal fin. Weakly expressed in the dorsal part of the posterior spinal cord and in blood cell precursors.

The protein localises to the secreted. In terms of biological role, growth factor that controls proliferation and cellular differentiation in the retina. Plays a key role in regulating apoptosis during retinal development. Establishes dorsal-ventral positional information in the retina and controls the formation of the retinotectal map. Functions maternally in dorsal/ventral patterning to induce the expression of the zygotic bmp2b and bmp4 genes and ventralize embryos. Zygotic expression does not appear to regulate axis specification, but instead functions to establish the integrity of the axial vessels during embryonic development. May be involved in maintaining the identity of cells of the dorsal-most neural tube and of at least a subset of neural crest cells. This Danio rerio (Zebrafish) protein is Growth/differentiation factor 6-A (gdf6a).